A 157-amino-acid chain; its full sequence is Small ribosomal subunit protein uS7 (157 aa).

It belongs to the universal ribosomal protein uS7 family. In terms of assembly, part of the 30S ribosomal subunit. Contacts proteins S9 and S11.

Its function is as follows. One of the primary rRNA binding proteins, it binds directly to 16S rRNA where it nucleates assembly of the head domain of the 30S subunit. Is located at the subunit interface close to the decoding center, probably blocks exit of the E-site tRNA. In Polaromonas sp. (strain JS666 / ATCC BAA-500), this protein is Small ribosomal subunit protein uS7.